The chain runs to 32 residues: Dermatoxin-J3 (32 aa).

Gln-32 is modified (glutamine amide).

In terms of tissue distribution, expressed by the skin glands.

It localises to the secreted. Functionally, antimicrobial peptide. The protein is Dermatoxin-J3 of Phasmahyla jandaia (Jandaia leaf frog).